We begin with the raw amino-acid sequence, 130 residues long: Small ribosomal subunit protein uS8 (130 aa).

The protein belongs to the universal ribosomal protein uS8 family. Part of the 30S ribosomal subunit. Contacts proteins S5 and S12.

One of the primary rRNA binding proteins, it binds directly to 16S rRNA central domain where it helps coordinate assembly of the platform of the 30S subunit. The protein is Small ribosomal subunit protein uS8 of Pseudomonas fluorescens (strain ATCC BAA-477 / NRRL B-23932 / Pf-5).